Reading from the N-terminus, the 250-residue chain is Putative (5-formylfuran-3-yl)methyl phosphate synthase (250 aa).

The Schiff-base intermediate with substrate role is filled by Lys29. The Proton acceptor role is filled by Lys87.

Belongs to the MfnB family.

It catalyses the reaction 2 D-glyceraldehyde 3-phosphate = 4-(hydroxymethyl)-2-furancarboxaldehyde phosphate + phosphate + 2 H2O. Functionally, catalyzes the formation of 4-(hydroxymethyl)-2-furancarboxaldehyde phosphate (4-HFC-P) from two molecules of glyceraldehyde-3-P (GA-3-P). The polypeptide is Putative (5-formylfuran-3-yl)methyl phosphate synthase (Streptomyces griseus subsp. griseus (strain JCM 4626 / CBS 651.72 / NBRC 13350 / KCC S-0626 / ISP 5235)).